Consider the following 444-residue polypeptide: Transcription activator AKTR-3 (444 aa).

The zn(2)-C6 fungal-type DNA-binding region spans 16–43 (CDFCTQSKLRCNKNKPSCRRCTIQQQPC). Residues 49-89 (RRTGRPPKHPRTANDCQEANGQHGEQDPVTSTPGGSCQQQS) are disordered. A compositionally biased stretch (basic residues) spans 50-59 (RTGRPPKHPR). Polar residues predominate over residues 76-89 (PVTSTPGGSCQQQS).

The protein localises to the nucleus. Transcription factor that regulates the expression of the gene clusters that mediate the biosynthesis of the host-selective toxins (HSTs) AK-toxins responsible for Japanese pear black spot disease by the Japanese pear pathotype. AK-toxins are esters of 9,10-epoxy 8-hydroxy 9-methyldecatrienoic acid (EDA). On cellular level, AK-toxins affect plasma membrane of susceptible cells and cause a sudden increase in loss of K(+) after a few minutes of toxin treatment. This Alternaria alternata (Alternaria rot fungus) protein is Transcription activator AKTR-3.